Here is a 224-residue protein sequence, read N- to C-terminus: Small ribosomal subunit protein uS3 (224 aa).

Residues 38–106 (LREFVKEKLG…EVYLNVVEVR (69 aa)) form the KH type-2 domain.

The protein belongs to the universal ribosomal protein uS3 family. In terms of assembly, part of the 30S ribosomal subunit. Forms a tight complex with proteins S10 and S14.

In terms of biological role, binds the lower part of the 30S subunit head. Binds mRNA in the 70S ribosome, positioning it for translation. The sequence is that of Small ribosomal subunit protein uS3 from Anaeromyxobacter dehalogenans (strain 2CP-C).